Consider the following 396-residue polypeptide: MSVRLVLAKGREKSLLRRHPWVFSGAVARMEGKASLGETIDIVDHQGKWLARGAYSPASQIRARVWTFDPSESIDIAFFSRRLQQAQKWRDWLAQKDGLDSYRLIAGESDGLPGITIDRFGNFLVLQLLSAGAEYQRAALVSALQTLYPECAIYDRSDVAVRKKEGMELTLGLVTGELPPALLPIEEHGMKLLVDIQHGHKTGYYLDQRDSRLATRRYVENKRVLNCFSYTGGFAVSALMGGCSQVVSVDTSQEALDIARQNVELNKLDLSKAEFVRDDVFKLLRTYRDRGEKFDVIVMDPPKFVENKSQLMGACRGYKDINMLAIQLLNEGGILLTFSCSGLMTSDLFQKIIADAAIDAGRDVQFIEQFRQAADHPVIATYPEGLYLKGFACRVM.

In terms of domain architecture, PUA spans 2–81 (SVRLVLAKGR…ESIDIAFFSR (80 aa)).

The protein belongs to the methyltransferase superfamily. RlmI family.

Its subcellular location is the cytoplasm. It carries out the reaction cytidine(1962) in 23S rRNA + S-adenosyl-L-methionine = 5-methylcytidine(1962) in 23S rRNA + S-adenosyl-L-homocysteine + H(+). Specifically methylates the cytosine at position 1962 (m5C1962) of 23S rRNA. The polypeptide is Ribosomal RNA large subunit methyltransferase I (Shigella boydii serotype 4 (strain Sb227)).